The sequence spans 5073 residues: Malformin synthetase mlfA (5073 aa).

The tract at residues 194–585 (ERHATNRPHS…CGRADTQVKL (392 aa)) is adenylation 1. In terms of domain architecture, Carrier 1 spans 726–799 (SRLEQEVQLA…EAASLAEVQE (74 aa)). O-(pantetheine 4'-phosphoryl)serine is present on Ser760. The segment at 837-1268 (EDVFPCTTMQ…ALNTLSLLQA (432 aa)) is condensation 1. Positions 1296 to 1685 (DRWVTRHPEG…GRKDTQVKLR (390 aa)) are adenylation 2. Positions 1823 to 1900 (TPASELERTL…QLAAEVGEPA (78 aa)) constitute a Carrier 2 domain. O-(pantetheine 4'-phosphoryl)serine is present on Ser1860. 2 disordered regions span residues 1901–1930 (GQSA…DGVD) and 1963–1984 (GGSS…SSSK). Low complexity-rich tracts occupy residues 1903 to 1927 (SASS…STND) and 1965 to 1982 (SSSN…SSSS). The interval 2031–2446 (EDIYPATALQ…AVSCSDTETL (416 aa)) is condensation 2. Positions 2469 to 2861 (SRTPHAPAVC…IGRRDGQLKL (393 aa)) are adenylation 3. One can recognise a Carrier 3 domain in the interval 2997-3073 (RPKTSQEQEM…QLICHLNSIR (77 aa)). O-(pantetheine 4'-phosphoryl)serine is present on Ser3034. Condensation regions lie at residues 3090-3555 (WVAL…TYDQ) and 3576-3995 (DIYP…EQLV). Positions 4020–4410 (HASRQAVCAW…VGRKDNQIKF (391 aa)) are adenylation 4. Residues 4544–4620 (MPSTAAERKM…DLGDQARSPN (77 aa)) form the Carrier 4 domain. Ser4581 carries the O-(pantetheine 4'-phosphoryl)serine modification. The tract at residues 4611–4633 (DLGDQARSPNADNQRVSTASSAG) is disordered. Positions 4617 to 4631 (RSPNADNQRVSTASS) are enriched in polar residues. The interval 4657–4991 (DVLPTTSFQR…LQTIVQHQNN (335 aa)) is condensation 5.

This sequence belongs to the NRP synthetase family.

It participates in secondary metabolite biosynthesis. Its function is as follows. Nonribosomal peptide synthetase; part of the gene cluster that mediates the biosynthesis of malformins, cyclic pentapeptides with a disulfide bond between 2 consecutive cysteins, that show potential anti-tumor as well as antimalarial and antitrypanosomal properties. The nonribosomal peptide synthetase mlfA is responsible of the formation of the cyclic pentapeptide. The malformin biosynthesis clusters in malformin-producing fungi also contain enzymes involved in the formation of the disulfide bond between the two consecutive cysteins within malformins, in addition to additional tailoring enzymes such as methyltransferases or oxidoreductases. They are also composed of up to 4 major facilitator superfamily transporters, and transcription factors probably involved in the regulation of the expression of those clusters. This is Malformin synthetase mlfA from Aspergillus tubingensis (strain CBS 134.48).